The primary structure comprises 335 residues: Protein-arginine kinase (335 aa).

A Phosphagen kinase C-terminal domain is found at 21 to 244 (IVMSSRIRLA…NQIIHDEKQI (224 aa)). ATP contacts are provided by residues 24 to 28 (SSRIR), His82, Arg115, 166 to 170 (RASVM), and 197 to 202 (RGIYGE).

The protein belongs to the ATP:guanido phosphotransferase family.

It catalyses the reaction L-arginyl-[protein] + ATP = N(omega)-phospho-L-arginyl-[protein] + ADP + H(+). Functionally, catalyzes the specific phosphorylation of arginine residues in proteins. The polypeptide is Protein-arginine kinase (Staphylococcus aureus (strain Mu3 / ATCC 700698)).